Here is a 210-residue protein sequence, read N- to C-terminus: Vacuolar protein sorting-associated protein 28 homolog 2 (210 aa).

In terms of domain architecture, VPS28 N-terminal spans 1–99 (MMEVKLWNDK…VTSGLPATVE (99 aa)). Residues 109–205 (SNSASIVAEC…SSYNSFMAAL (97 aa)) enclose the VPS28 C-terminal domain.

It belongs to the VPS28 family. Component of the endosomal sorting required for transport complex I (ESCRT-I), composed of ELC, VPS28 and VPS37. Interacts with ELC.

It is found in the endosome. In terms of biological role, component of the ESCRT-I complex (endosomal sorting complex required for transport I), a regulator of vesicular trafficking process. Required for the sorting of endocytic ubiquitinated cargos into multivesicular bodies (MVBs). Mediates the association to the ESCRT-0 complex. This chain is Vacuolar protein sorting-associated protein 28 homolog 2 (VPS28-2), found in Arabidopsis thaliana (Mouse-ear cress).